The primary structure comprises 186 residues: Probable RNA 2'-phosphotransferase (186 aa).

The protein belongs to the KptA/TPT1 family.

Its function is as follows. Removes the 2'-phosphate from RNA via an intermediate in which the phosphate is ADP-ribosylated by NAD followed by a presumed transesterification to release the RNA and generate ADP-ribose 1''-2''-cyclic phosphate (APPR&gt;P). May function as an ADP-ribosylase. The polypeptide is Probable RNA 2'-phosphotransferase (Agrobacterium fabrum (strain C58 / ATCC 33970) (Agrobacterium tumefaciens (strain C58))).